Consider the following 383-residue polypeptide: Probable 2-succinylbenzoate--CoA ligase (383 aa).

It belongs to the ATP-dependent AMP-binding enzyme family. MenE subfamily.

It carries out the reaction 2-succinylbenzoate + ATP + CoA = 2-succinylbenzoyl-CoA + AMP + diphosphate. It participates in quinol/quinone metabolism; 1,4-dihydroxy-2-naphthoate biosynthesis; 1,4-dihydroxy-2-naphthoate from chorismate: step 5/7. The protein operates within quinol/quinone metabolism; menaquinone biosynthesis. Converts 2-succinylbenzoate (OSB) to 2-succinylbenzoyl-CoA (OSB-CoA). May be involved in the biosynthesis of menaquinone. The protein is Probable 2-succinylbenzoate--CoA ligase (menE) of Mycobacterium tuberculosis (strain CDC 1551 / Oshkosh).